A 98-amino-acid chain; its full sequence is Large ribosomal subunit protein uL23 (98 aa).

This sequence belongs to the universal ribosomal protein uL23 family. In terms of assembly, part of the 50S ribosomal subunit. Contacts protein L29, and trigger factor when it is bound to the ribosome.

Its function is as follows. One of the early assembly proteins it binds 23S rRNA. One of the proteins that surrounds the polypeptide exit tunnel on the outside of the ribosome. Forms the main docking site for trigger factor binding to the ribosome. The polypeptide is Large ribosomal subunit protein uL23 (Gluconacetobacter diazotrophicus (strain ATCC 49037 / DSM 5601 / CCUG 37298 / CIP 103539 / LMG 7603 / PAl5)).